Reading from the N-terminus, the 78-residue chain is TauPI-stichotoxin-Hcr2b (78 aa).

A signal peptide spans 1–22 (MKGTFLICLILIAGFSFKSTQA). Positions 26–76 (CLEPKVVGPCTAYFRRFYFDSETGKCTVFIYGGCEGNGNNFETLRACRAIC) constitute a BPTI/Kunitz inhibitor domain. 3 cysteine pairs are disulfide-bonded: C26–C76, C35–C59, and C51–C72.

This sequence belongs to the venom Kunitz-type family. Sea anemone type 2 potassium channel toxin subfamily.

The protein resides in the secreted. It localises to the nematocyst. Its function is as follows. This protease inhibitor shows two different activities, it inhibits both the capsaicin receptor TRPV1 and serine proteases. It partially (max 50%) and reversibly inhibits capsaicin-induced response of TRPV1 (IC(50)=54 nM), a receptor of the pain pathway. The second activity is a weak inhibition of trypsin and chymotrypsin activity (Ki=1 uM and Ki=5 uM, respectively). In vivo, it shows antinociceptive and analgesic activities. It significantly prolongs tail-flick latency and reduces capsaicin-induced acute pain. In vivo, unlike other TRPV1 antagonists whose activity is associated with hyperthermia, this protein has the remarkable feature of dropping core body temperature. This Radianthus crispa (Leathery sea anemone) protein is TauPI-stichotoxin-Hcr2b.